Here is a 517-residue protein sequence, read N- to C-terminus: MTTFRPLSSFEKKILTQSLNDQRNGTIFSSTYSKSLSRENDADWHSDEVTLGTNSSKDDSRLTLPLIATTLKRLIKSQPALFATVNEEWEFEPLKQLKTSDIVNVIEFETIKDKEVNCHWGVPPPYLLRHAFNKTRFVPGSNKPLWTLYVIDEALLVFHGHDVLFDIFSAANFHKLFLKELNEISTVTHSEDRILFDVNDINLSELKFPKSIYDSAKLHLPAMTPQIFHKQTQSFFKSIYYNTLKRPFGYLTNQTSLSSSVSATQLKKYNDILNAHTSLCGTTVFGIVNNQRFNYLKSIVNQEHICLRSFICGIAMICLKPLVKDFSGTIVFTIPINLRNHLGLGGSLGLFFKELRVECPLSLIDDELSANEFLTNSNDNEDNDDEFNERLMEYQFNKVTKHVSGFIMAKLRSWEKNGFNDDDIRRMKYDNDDDFHIQNSRTKLIQINDVSDISLSMNGDDKSFKIVSTGFTSSINRPTLMSLSYTYCEEMGLNICIHYPDSYNLESFVECFESFIE.

In terms of assembly, interacts with PDR17/PSTB2 and SCS2.

In terms of biological role, phosphatidic acid-binding protein involved in interorganelle phosphatidylserine (PtdSer) transport. Linkks a PtdSer donor membrane (via binding of SCS2 and phosphatidic acid present in the donor membrane) with an acceptor membrane (via its interaction with PDR17), forming a zone of apposition that facilitates PtdSer transfer. The protein is PSTB2-interacting protein 1 of Saccharomyces cerevisiae (strain ATCC 204508 / S288c) (Baker's yeast).